Consider the following 163-residue polypeptide: Nucleotide-binding protein CGSHiGG_08790 (163 aa).

The protein belongs to the YajQ family.

Functionally, nucleotide-binding protein. This Haemophilus influenzae (strain PittGG) protein is Nucleotide-binding protein CGSHiGG_08790.